Reading from the N-terminus, the 88-residue chain is MANTPSAKKAVNKIAKRTQVNKARRSRVRTFIRKFNDALAGGDKASAETAFRNCEPEIMRAVSKGVLHKNTAARKVSRLVKRLKAISA.

A disordered region spans residues 1-22 (MANTPSAKKAVNKIAKRTQVNK).

This sequence belongs to the bacterial ribosomal protein bS20 family.

Functionally, binds directly to 16S ribosomal RNA. The protein is Small ribosomal subunit protein bS20 of Bartonella bacilliformis (strain ATCC 35685 / KC583 / Herrer 020/F12,63).